Reading from the N-terminus, the 156-residue chain is Small ribosomal subunit protein uS7 (156 aa).

Belongs to the universal ribosomal protein uS7 family. As to quaternary structure, part of the 30S ribosomal subunit. Contacts proteins S9 and S11.

Its function is as follows. One of the primary rRNA binding proteins, it binds directly to 16S rRNA where it nucleates assembly of the head domain of the 30S subunit. Is located at the subunit interface close to the decoding center, probably blocks exit of the E-site tRNA. The protein is Small ribosomal subunit protein uS7 of Campylobacter jejuni subsp. jejuni serotype O:6 (strain 81116 / NCTC 11828).